Reading from the N-terminus, the 945-residue chain is Netrin receptor UNC5B (945 aa).

The N-terminal stretch at 1-26 is a signal peptide; the sequence is MGARSGARGALLLALLLCWDPRLSQA. The Extracellular portion of the chain corresponds to 27-377; it reads GTDSGSEVLP…LEASGDAALY (351 aa). The region spanning 48-145 is the Ig-like domain; it reads PYFLQEPQDA…AGTTKSRRAY (98 aa). Disulfide bonds link C69/C130, C81/C128, C174/C225, C258/C295, C262/C299, C273/C285, C314/C348, C318/C353, and C326/C338. The Ig-like C2-type domain maps to 147 to 242; sequence RIAYLRKNFD…KRRSTTATVI (96 aa). N-linked (GlcNAc...) asparagine glycosylation occurs at N222. 2 TSP type-1 domains span residues 246-300 and 302-354; these read NGGW…TICP and DGAW…GLCM. N347 is a glycosylation site (N-linked (GlcNAc...) asparagine). The chain crosses the membrane as a helical span at residues 378-398; it reads AGLVVAIFVVVAILMAVGVVV. The Cytoplasmic portion of the chain corresponds to 399–945; it reads YRRNCRDFDT…LVAVATDGDC (547 aa). C403 carries the S-palmitoyl cysteine lipid modification. A ZU5 domain is found at 543-686; it reads SSVSGTFGCL…LGTYVFTGES (144 aa). Y581 carries the phosphotyrosine modification. Residues 689 to 838 are UPA domain; the sequence is RSAVKRLQLA…AETPAGSLDT (150 aa). The tract at residues 707–725 is interaction with DCC; that stretch reads SLEYSLRVYCLEDTPVALK. The 79-residue stretch at 865–943 folds into the Death domain; it reads KICNSLDAPN…EMLVAVATDG (79 aa).

It belongs to the unc-5 family. As to quaternary structure, interacts with the cytoplasmic part of DCC. Interacts with GNAI2 via its cytoplasmic part. Interacts (via death domain) with DAPK1 (via death domain). Interacts (via extracellular domain) with FLRT3 (via extracellular domain); the interaction is direct. Interacts (via extracellular domain) with FLRT2 and FLRT3 (via extracellular domain), but has higher affinity for FLRT3. Identified in a complex with FLRT3 and ADGRL3; does not interact with ADGRL3 by itself. Phosphorylated on cytoplasmic tyrosine residues. In terms of processing, proteolytically cleaved by caspases during apoptosis. The cleavage does not take place when the receptor is associated with netrin ligand. Its cleavage by caspases is required to induce apoptosis. Post-translationally, palmitoylation is required for pro-apoptotic activity, but not for location at lipid rafts. In terms of tissue distribution, highly expressed in brain. Also expressed at lower level in developing lung, cartilage, kidney and hematopoietic and immune tissues.

The protein localises to the cell membrane. The protein resides in the membrane raft. Its function is as follows. Receptor for netrin required for axon guidance. Mediates axon repulsion of neuronal growth cones in the developing nervous system upon ligand binding. Axon repulsion in growth cones may be caused by its association with DCC that may trigger signaling for repulsion. Functions as a netrin receptor that negatively regulates vascular branching during angiogenesis. Mediates retraction of tip cell filopodia on endothelial growth cones in response to netrin. It also acts as a dependence receptor required for apoptosis induction when not associated with netrin ligand. Mediates apoptosis by activating DAPK1. In the absence of NTN1, activates DAPK1 by reducing its autoinhibitory phosphorylation at Ser-308 thereby increasing its catalytic activity. The sequence is that of Netrin receptor UNC5B (UNC5B) from Homo sapiens (Human).